A 327-amino-acid polypeptide reads, in one-letter code: Chain length determinant protein (327 aa).

Residues 1–31 (MTVDSNTSSGRGNDPEQIDLIELLLQLWRGK) lie on the Cytoplasmic side of the membrane. The helical transmembrane segment at 32 to 52 (MTIIVAVIIAILLAVGYLMIA) threads the bilayer. At 53–294 (KEKWTSTAII…LPVRRDSPKT (242 aa)) the chain is on the periplasmic side. The chain crosses the membrane as a helical span at residues 295–315 (AITLVLAVLLGGMIGAGIVLG). Residues 316–327 (RNALRSYKPKAL) lie on the Cytoplasmic side of the membrane.

The protein belongs to the WzzB/Cld/Rol family.

It localises to the cell inner membrane. It participates in bacterial outer membrane biogenesis; lipopolysaccharide biosynthesis. Functionally, confers a modal distribution of chain length on the O-antigen component of lipopolysaccharide (LPS). Gives rise to a reduced number of short chain molecules and increases in numbers of longer molecules, with a modal value of 20. The protein is Chain length determinant protein (wzzB) of Salmonella typhimurium (strain LT2 / SGSC1412 / ATCC 700720).